The following is a 149-amino-acid chain: Oligosaccharyltransferase complex subunit OSTC (149 aa).

The Cytoplasmic portion of the chain corresponds to Met-1 to Thr-32. Residues Val-33 to Ile-53 form a helical membrane-spanning segment. Residues Val-54 to Tyr-83 are Extracellular-facing. The chain crosses the membrane as a helical span at residues Ile-84 to Leu-104. Residues Asp-105–Arg-117 are Cytoplasmic-facing. The helical transmembrane segment at Phe-118–Phe-138 threads the bilayer. At Met-139–Gly-149 the chain is on the extracellular side.

The protein belongs to the OSTC family. As to quaternary structure, specific component of the STT3A-containing form of the oligosaccharyltransferase (OST) complex.

Its subcellular location is the membrane. The protein operates within protein modification; protein glycosylation. Functionally, specific component of the STT3A-containing form of the oligosaccharyl transferase (OST) complex that catalyzes the initial transfer of a defined glycan (Glc(3)Man(9)GlcNAc(2) in eukaryotes) from the lipid carrier dolichol-pyrophosphate to an asparagine residue within an Asn-X-Ser/Thr consensus motif in nascent polypeptide chains, the first step in protein N-glycosylation. N-glycosylation occurs cotranslationally and the complex associates with the Sec61 complex at the channel-forming translocon complex that mediates protein translocation across the endoplasmic reticulum (ER). All subunits are required for a maximal enzyme activity. The protein is Oligosaccharyltransferase complex subunit OSTC of Gallus gallus (Chicken).